The following is a 444-amino-acid chain: NADH-ubiquinone oxidoreductase chain 4 (444 aa).

The next 13 helical transmembrane spans lie at 4 to 24 (YLFMIIFLIPICLLGNCWWLV), 28 to 48 (IFLLSFIFMISLYSYSDLSMI), 53 to 73 (GVDFYSFMLILLSLWICCLMI), 87 to 107 (NFFVFVVLLLLIMLFCSFSSL), 109 to 129 (LFSFYIFFESSLVPTLFLILG), 141 to 161 (VYLMFYTLVASLPLLLVLFSI), 173 to 193 (LIDFGSFYFLFYVFSIFAFLV), 212 to 232 (PISGSMILAGILLKLGGYGIF), 245 to 265 (FNYFVLSLSLFGGVIISFVCF), 272 to 294 (SLIAYSSVAHMSLVICGLMTMNW), 306 to 326 (GHGISSSGLFCLSNIIYELLG), 330 to 350 (LLINKGMINLMPSMTIWWFLL), and 373 to 393 (IISWSSYMILLLIFLSFFSAV).

The protein belongs to the complex I subunit 4 family.

The protein resides in the mitochondrion membrane. It catalyses the reaction a ubiquinone + NADH + 5 H(+)(in) = a ubiquinol + NAD(+) + 4 H(+)(out). Its function is as follows. Core subunit of the mitochondrial membrane respiratory chain NADH dehydrogenase (Complex I) that is believed to belong to the minimal assembly required for catalysis. Complex I functions in the transfer of electrons from NADH to the respiratory chain. The immediate electron acceptor for the enzyme is believed to be ubiquinone. This is NADH-ubiquinone oxidoreductase chain 4 (ND4) from Locusta migratoria (Migratory locust).